Here is a 478-residue protein sequence, read N- to C-terminus: Leukotoxin secretion protein D (478 aa).

At 1-77 (MKIWLSGIYE…LAVAIVLASV (77 aa)) the chain is on the cytoplasmic side. Residues 78 to 98 (SKVEIVATAPGKLTFSGRSKE) traverse the membrane as a helical segment. Topologically, residues 99 to 478 (IKPIENTIVQ…ESVTESLRER (380 aa)) are periplasmic.

Belongs to the membrane fusion protein (MFP) (TC 8.A.1) family.

Its subcellular location is the cell inner membrane. In terms of biological role, involved in the transport of the Leukotoxin. The polypeptide is Leukotoxin secretion protein D (lktD) (Pasteurella haemolytica-like sp. (strain 5943B)).